The chain runs to 291 residues: Nucleotide-binding protein LGAS_1315 (291 aa).

Gly13–Thr20 contributes to the ATP binding site. Position 63-66 (Asp63–Val66) interacts with GTP.

The protein belongs to the RapZ-like family.

Its function is as follows. Displays ATPase and GTPase activities. This chain is Nucleotide-binding protein LGAS_1315, found in Lactobacillus gasseri (strain ATCC 33323 / DSM 20243 / BCRC 14619 / CIP 102991 / JCM 1131 / KCTC 3163 / NCIMB 11718 / NCTC 13722 / AM63).